Reading from the N-terminus, the 101-residue chain is Large ribosomal subunit protein bL28 (101 aa).

The protein belongs to the bacterial ribosomal protein bL28 family.

In Rhodopseudomonas palustris (strain BisA53), this protein is Large ribosomal subunit protein bL28.